The primary structure comprises 186 residues: Myosin light chain 1, skeletal muscle isoform (186 aa).

Position 1 is a blocked amino end (Met) (Met1). Residues 1–26 (MPKAPAKKAEPAPAPAPAPEPAPAPA) form a disordered region. Over residues 12–26 (APAPAPAPEPAPAPA) the composition is skewed to pro residues. EF-hand domains are found at residues 42–77 (DQIE…LGQN) and 119–154 (AGFE…LGEK).

As to quaternary structure, myosin is a hexamer of 2 heavy chains and 4 light chains.

The polypeptide is Myosin light chain 1, skeletal muscle isoform (Chelon ramada (Thin-lipped grey mullet)).